The primary structure comprises 328 residues: Olfactory receptor 4A16 (328 aa).

Over methionine 1–lysine 23 the chain is Extracellular. Asparagine 6 carries N-linked (GlcNAc...) asparagine glycosylation. The chain crosses the membrane as a helical span at residues threonine 24–threonine 47. Residues isoleucine 48–serine 55 are Cytoplasmic-facing. A helical membrane pass occupies residues leucine 56–proline 77. Residues lysine 78–glutamine 98 are Extracellular-facing. Cysteine 95 and cysteine 187 are disulfide-bonded. The chain crosses the membrane as a helical span at residues leucine 99–tyrosine 118. At aspartate 119 to leucine 137 the chain is on the cytoplasmic side. Residues valine 138–valine 156 form a helical membrane-spanning segment. Over glutamine 157–isoleucine 193 the chain is Extracellular. Residues glycine 194–glycine 217 form a helical membrane-spanning segment. The Cytoplasmic portion of the chain corresponds to valine 218–lysine 233. A helical transmembrane segment spans residues alanine 234–tyrosine 256. Topologically, residues valine 257–lysine 267 are extracellular. Residues leucine 268–leucine 287 traverse the membrane as a helical segment. Topologically, residues arginine 288–arginine 328 are cytoplasmic.

This sequence belongs to the G-protein coupled receptor 1 family.

It is found in the cell membrane. Functionally, odorant receptor. This is Olfactory receptor 4A16 (OR4A16) from Homo sapiens (Human).